We begin with the raw amino-acid sequence, 37 residues long: Potassium channel toxin alpha-KTx 11.1 (37 aa).

3 disulfide bridges follow: C8-C27, C13-C33, and C17-C35.

The protein belongs to the short scorpion toxin superfamily. Potassium channel inhibitor family. Alpha-KTx 11 subfamily. In terms of tissue distribution, expressed by the venom gland.

Its subcellular location is the secreted. Its function is as follows. Binds and inhibits voltage-sensitive potassium channels. Inhibits the vertebrate potassium channels Kv1.1/KCNA1, Kv1.2/KCNA2 and Kv1.3/KCNA3 with low affinity. Also weakly inhibits Kv7.1/KCNQ1 (10 uM of the toxin inhibits currents by 21.43%). The polypeptide is Potassium channel toxin alpha-KTx 11.1 (Parabuthus villosus (Black hairy thick-tailed scorpion)).